The chain runs to 162 residues: Tegument protein BLRF2 (162 aa).

The stretch at 12-43 (VKAVDMSMEDMAARLARLESENKALKQQVLRG) forms a coiled coil. Positions 121–162 (GAKGQPSPGEGTRLRESNDPNATRRARSRSRGREAKKVQISD) are disordered. Basic and acidic residues predominate over residues 151 to 162 (RGREAKKVQISD).

The protein belongs to the herpesviridae BLRF2 family. Homooligomer; homooligomerizes and binds double-stranded DNA (dsDNA) cooperatively. Interacts with host CGAS.

Its subcellular location is the virion tegument. The protein localises to the host cytoplasm. In terms of biological role, plays a role in the inhibition of host innate immune system by targeting the CGAS enzymatic activity which is the principal cytosolic DNA sensor that detects invading viral DNA. Acts by inhibiting CGAS-DNA phase separation: directly binds double-stranded DNA (dsDNA) in a length dependent but sequence independent manner and is able to form DNA-induced phase separation in infected cells. DNA phase separation of ORF52 mediates disruption of liquid-like droplets in which CGAS is activated, thereby preventing CGAS activity. The protein is Tegument protein BLRF2 of Epstein-Barr virus (strain GD1) (HHV-4).